Here is an 874-residue protein sequence, read N- to C-terminus: Alanine--tRNA ligase (874 aa).

Zn(2+)-binding residues include histidine 564, histidine 568, cysteine 665, and histidine 669.

Belongs to the class-II aminoacyl-tRNA synthetase family. The cofactor is Zn(2+).

It is found in the cytoplasm. It catalyses the reaction tRNA(Ala) + L-alanine + ATP = L-alanyl-tRNA(Ala) + AMP + diphosphate. In terms of biological role, catalyzes the attachment of alanine to tRNA(Ala) in a two-step reaction: alanine is first activated by ATP to form Ala-AMP and then transferred to the acceptor end of tRNA(Ala). Also edits incorrectly charged Ser-tRNA(Ala) and Gly-tRNA(Ala) via its editing domain. This Burkholderia orbicola (strain MC0-3) protein is Alanine--tRNA ligase.